Here is a 268-residue protein sequence, read N- to C-terminus: 4-hydroxy-tetrahydrodipicolinate reductase (268 aa).

8–13 is a binding site for NAD(+); it reads GAAGRM. Residue Arg-36 coordinates NADP(+). NAD(+) contacts are provided by residues 99–101 and 123–126; these read GTT and AANF. Catalysis depends on His-156, which acts as the Proton donor/acceptor. Residue His-157 coordinates (S)-2,3,4,5-tetrahydrodipicolinate. The active-site Proton donor is Lys-160. Position 166 to 167 (166 to 167) interacts with (S)-2,3,4,5-tetrahydrodipicolinate; the sequence is GT.

This sequence belongs to the DapB family.

The protein localises to the cytoplasm. The enzyme catalyses (S)-2,3,4,5-tetrahydrodipicolinate + NAD(+) + H2O = (2S,4S)-4-hydroxy-2,3,4,5-tetrahydrodipicolinate + NADH + H(+). It catalyses the reaction (S)-2,3,4,5-tetrahydrodipicolinate + NADP(+) + H2O = (2S,4S)-4-hydroxy-2,3,4,5-tetrahydrodipicolinate + NADPH + H(+). Its pathway is amino-acid biosynthesis; L-lysine biosynthesis via DAP pathway; (S)-tetrahydrodipicolinate from L-aspartate: step 4/4. Catalyzes the conversion of 4-hydroxy-tetrahydrodipicolinate (HTPA) to tetrahydrodipicolinate. The protein is 4-hydroxy-tetrahydrodipicolinate reductase of Pseudomonas fluorescens (strain SBW25).